The chain runs to 273 residues: 4-hydroxy-tetrahydrodipicolinate reductase (273 aa).

NAD(+) contacts are provided by residues 11-16 (GALGRM) and 106-108 (GTT). His-162 acts as the Proton donor/acceptor in catalysis. His-163 lines the (S)-2,3,4,5-tetrahydrodipicolinate pocket. Lys-166 (proton donor) is an active-site residue. 172 to 173 (GT) provides a ligand contact to (S)-2,3,4,5-tetrahydrodipicolinate.

This sequence belongs to the DapB family.

The protein resides in the cytoplasm. The enzyme catalyses (S)-2,3,4,5-tetrahydrodipicolinate + NAD(+) + H2O = (2S,4S)-4-hydroxy-2,3,4,5-tetrahydrodipicolinate + NADH + H(+). It carries out the reaction (S)-2,3,4,5-tetrahydrodipicolinate + NADP(+) + H2O = (2S,4S)-4-hydroxy-2,3,4,5-tetrahydrodipicolinate + NADPH + H(+). The protein operates within amino-acid biosynthesis; L-lysine biosynthesis via DAP pathway; (S)-tetrahydrodipicolinate from L-aspartate: step 4/4. Functionally, catalyzes the conversion of 4-hydroxy-tetrahydrodipicolinate (HTPA) to tetrahydrodipicolinate. This is 4-hydroxy-tetrahydrodipicolinate reductase from Synechococcus sp. (strain RCC307).